A 368-amino-acid polypeptide reads, in one-letter code: 1-aminocyclopropane-1-carboxylate oxidase (368 aa).

In terms of domain architecture, Fe2OG dioxygenase spans 177–307; the sequence is PFILMGLLHY…RFSIPFFLDP (131 aa). The segment at 191–226 is disordered; sequence HQEQEEEQEDDESNNGGKKSPNPDESKKPEVEKFGT. The span at 194-203 shows a compositional bias: acidic residues; the sequence is QEEEQEDDES. The span at 211 to 223 shows a compositional bias: basic and acidic residues; it reads PNPDESKKPEVEK. The Fe cation site is built by His229, Asp231, and His287. Arg298 contributes to the 2-oxoglutarate binding site.

It belongs to the iron/ascorbate-dependent oxidoreductase family. Fe(2+) is required as a cofactor.

The enzyme catalyses 1-aminocyclopropane-1-carboxylate + L-ascorbate + O2 = ethene + L-dehydroascorbate + hydrogen cyanide + CO2 + 2 H2O. It functions in the pathway alkene biosynthesis; ethylene biosynthesis via S-adenosyl-L-methionine; ethylene from S-adenosyl-L-methionine: step 2/2. Involved in ethylene biosynthesis. Overexpression induces overproduction of ethylene. This Dictyostelium discoideum (Social amoeba) protein is 1-aminocyclopropane-1-carboxylate oxidase (aco).